Consider the following 316-residue polypeptide: Phosphate acyltransferase (316 aa).

The protein belongs to the PlsX family. In terms of assembly, homodimer. Probably interacts with PlsY.

The protein resides in the cytoplasm. It carries out the reaction a fatty acyl-[ACP] + phosphate = an acyl phosphate + holo-[ACP]. It functions in the pathway lipid metabolism; phospholipid metabolism. Its function is as follows. Catalyzes the reversible formation of acyl-phosphate (acyl-PO(4)) from acyl-[acyl-carrier-protein] (acyl-ACP). This enzyme utilizes acyl-ACP as fatty acyl donor, but not acyl-CoA. The polypeptide is Phosphate acyltransferase (Chlamydia felis (strain Fe/C-56) (Chlamydophila felis)).